The chain runs to 190 residues: Putative CRISPR system CMR subunit Cmr7 2 (190 aa).

The protein belongs to the CRISPR system Cmr7 family. As to quaternary structure, homodimer.

In terms of biological role, CRISPR (clustered regularly interspaced short palindromic repeat) is an adaptive immune system that provides protection against mobile genetic elements (viruses, transposable elements and conjugative plasmids). CRISPR clusters contain spacers, sequences complementary to antecedent mobile elements, and target invading nucleic acids. CRISPR clusters are transcribed and processed into CRISPR RNA (crRNA). The sequence is that of Putative CRISPR system CMR subunit Cmr7 2 (cmr7b) from Saccharolobus solfataricus (strain ATCC 35092 / DSM 1617 / JCM 11322 / P2) (Sulfolobus solfataricus).